Consider the following 343-residue polypeptide: N-acetyl-gamma-glutamyl-phosphate reductase (343 aa).

Residue Cys148 is part of the active site.

It belongs to the NAGSA dehydrogenase family. Type 1 subfamily.

It is found in the cytoplasm. The catalysed reaction is N-acetyl-L-glutamate 5-semialdehyde + phosphate + NADP(+) = N-acetyl-L-glutamyl 5-phosphate + NADPH + H(+). It functions in the pathway amino-acid biosynthesis; L-arginine biosynthesis; N(2)-acetyl-L-ornithine from L-glutamate: step 3/4. Functionally, catalyzes the NADPH-dependent reduction of N-acetyl-5-glutamyl phosphate to yield N-acetyl-L-glutamate 5-semialdehyde. This Caldicellulosiruptor bescii (strain ATCC BAA-1888 / DSM 6725 / KCTC 15123 / Z-1320) (Anaerocellum thermophilum) protein is N-acetyl-gamma-glutamyl-phosphate reductase.